The sequence spans 308 residues: Bifunctional protein FolD (308 aa).

Residues 175–177 (GRS), Ser-200, and Ile-241 each bind NADP(+).

The protein belongs to the tetrahydrofolate dehydrogenase/cyclohydrolase family. Homodimer.

The enzyme catalyses (6R)-5,10-methylene-5,6,7,8-tetrahydrofolate + NADP(+) = (6R)-5,10-methenyltetrahydrofolate + NADPH. It carries out the reaction (6R)-5,10-methenyltetrahydrofolate + H2O = (6R)-10-formyltetrahydrofolate + H(+). The protein operates within one-carbon metabolism; tetrahydrofolate interconversion. Its function is as follows. Catalyzes the oxidation of 5,10-methylenetetrahydrofolate to 5,10-methenyltetrahydrofolate and then the hydrolysis of 5,10-methenyltetrahydrofolate to 10-formyltetrahydrofolate. The polypeptide is Bifunctional protein FolD (Jannaschia sp. (strain CCS1)).